A 1207-amino-acid chain; its full sequence is Disease resistance protein RPP2B (1207 aa).

The 166-residue stretch at 15-180 (CEFDVFVSFR…EIVKNTFRML (166 aa)) folds into the TIR domain. Glutamate 89 is a catalytic residue. An NB-ARC domain is found at 201 to 445 (ELEKLLMFDN…FLDIACFFRS (245 aa)). LRR repeat units lie at residues 607–630 (PKELVDLSLRYSHIKQLWEDEKNT), 653–676 (AKNLERLDLEGCTSLDLLGSVKQM), 677–699 (NELIYLNLRDCTSLESLPKGFKI), 720–743 (SESIESLHLEGTAIERVVEHIESL), 744–767 (HSLILLNLKNCEKLKYLPNDLYKL), 769–791 (SLQELVLSGCSALESLPPIKEKM), 792–815 (ECLEILLMDGTSIKQTPEMSCLSN), 840–862 (NSFLSDLYLTNCNIDKLPDKFSS), and 863–886 (LRSLRCLCLSRNNIETLPESIEKL).

Belongs to the disease resistance TIR-NB-LRR family.

The catalysed reaction is NAD(+) + H2O = ADP-D-ribose + nicotinamide + H(+). Disease resistance protein that cooperates with RPP2A to confer resistance to Hyaloperonospora parasitica isolate Cala2. The polypeptide is Disease resistance protein RPP2B (Arabidopsis thaliana (Mouse-ear cress)).